The primary structure comprises 1172 residues: WD repeat-containing protein 48 homolog (1172 aa).

The interval 1 to 115 is disordered; it reads MYEYYSTGKI…HSYGGGGGGT (115 aa). A compositionally biased stretch (polar residues) spans 13-36; that stretch reads LPQQVDSNGINSKPMNSSPSTPIP. Residues 37 to 63 are compositionally biased toward low complexity; sequence NNNNNNNNNNNNNNNNNNNNNNNNNNN. Residues 64-89 are compositionally biased toward polar residues; that stretch reads RNKSQQSFYLNNNNRNCGFSSPTKPQ. Over residues 90-107 the composition is skewed to low complexity; sequence YNNNNNNNNNNNSNYNHS. WD repeat units follow at residues 152–202, 208–246, 249–548, 560–599, 602–641, 645–683, and 686–727; these read RHCF…GFKF, DHTDWVNDLFFNDSNILVSCSSDSTIKIWNTDSERCVNS, FHDD…SPMF, GEGISIYSLAIAQDASFVVSGSTERAIRGWDVRSGQKIFK, GHTDNIRSILLNDNSTRCLSASSDGTVRLWDIGEQRCIQV, LHTDSVWTLATNDSFSHFFSGGRDGMIFLTDLKTHQSRL, and RENE…NQSI. Residues 341–365 are compositionally biased toward low complexity; the sequence is ISTNNNNNNSSSSNNNNNNNNNNNN. The interval 341 to 544 is disordered; sequence ISTNNNNNNS…NDNNNLNKKF (204 aa). Polar residues-rich tracts occupy residues 366–377, 388–408, and 417–434; these read GQTNTHENTAET, QLSSVNKNGIRSNLSNNNFRN, and PPSSVLNHTPKILSSNGR. Positions 435–485 are enriched in low complexity; the sequence is NVNNRENNNNNNNNNNNNNNNNNNNNNNNNNNNNNNNNNINNNNHENNGNV. Residues 486–503 show a composition bias toward acidic residues; it reads DVDDEDDDDDDDDDDDDD. Basic and acidic residues predominate over residues 504-513; sequence CNKNKKKYDD. The segment covering 514–543 has biased composition (low complexity); it reads NNNNNNYNNNNNKKNNSNDNNNDNNNLNKK. Positions 745 to 769 are enriched in low complexity; that stretch reads NNNNNNNNNNNNNNNNNNNNNNNNN. Residues 745 to 775 form a disordered region; the sequence is NNNNNNNNNNNNNNNNNNNNNNNNNNREKLS. A WD 8 repeat occupies 794-833; sequence QGRAGIIKNQVLNNRRQVLTKDNDNNVQLWDITKGKEIES. The segment at 926-986 is disordered; that stretch reads ELNHSNDSVN…TNSTTPNSGR (61 aa). Residues 930–984 show a composition bias toward low complexity; it reads SNDSVNSSLSSNTSGDNNNNNYNNYNNYNNNNNNGLQKSSSSSSIVSTNSTTPNS.

This sequence belongs to the WD repeat WDR48 family.

The sequence is that of WD repeat-containing protein 48 homolog from Dictyostelium discoideum (Social amoeba).